Reading from the N-terminus, the 117-residue chain is Putative phosphotransferase enzyme IIB component MG129 (117 aa).

Residues 1-21 (MKWLLWLGYIFSFGLLYLWIV) form a helical membrane-spanning segment. One can recognise a PTS EIIB type-1 domain in the interval 42–117 (PFKVKDFVSA…ELKKKIEDEQ (76 aa)).

It localises to the membrane. The phosphoenolpyruvate-dependent sugar phosphotransferase system (PTS), a major carbohydrate active -transport system, catalyzes the phosphorylation of incoming sugar substrates concomitant with their translocation across the cell membrane. The chain is Putative phosphotransferase enzyme IIB component MG129 from Mycoplasma genitalium (strain ATCC 33530 / DSM 19775 / NCTC 10195 / G37) (Mycoplasmoides genitalium).